A 235-amino-acid polypeptide reads, in one-letter code: tRNA pseudouridine synthase B (235 aa).

Catalysis depends on Asp45, which acts as the Nucleophile.

Belongs to the pseudouridine synthase TruB family. Type 1 subfamily.

The catalysed reaction is uridine(55) in tRNA = pseudouridine(55) in tRNA. Its function is as follows. Responsible for synthesis of pseudouridine from uracil-55 in the psi GC loop of transfer RNAs. This Chlamydia pneumoniae (Chlamydophila pneumoniae) protein is tRNA pseudouridine synthase B.